The primary structure comprises 351 residues: D-alanine--D-alanine ligase (351 aa).

Residues 146 to 340 (KEIMLYNNIK…YEDLCESIVL (195 aa)) form the ATP-grasp domain. 173–226 (AFDYPMVVKPNSGGSSIGTRIVHDEAELAESLKDAYRFDDEIIVEEFITGREFS) is an ATP binding site. 3 residues coordinate Mg(2+): Asp-295, Glu-307, and Asn-309.

The protein belongs to the D-alanine--D-alanine ligase family. Mg(2+) is required as a cofactor. The cofactor is Mn(2+).

It is found in the cytoplasm. The catalysed reaction is 2 D-alanine + ATP = D-alanyl-D-alanine + ADP + phosphate + H(+). Its pathway is cell wall biogenesis; peptidoglycan biosynthesis. In terms of biological role, cell wall formation. In Pediococcus pentosaceus (strain ATCC 25745 / CCUG 21536 / LMG 10740 / 183-1w), this protein is D-alanine--D-alanine ligase.